Here is a 478-residue protein sequence, read N- to C-terminus: WD repeat-containing protein AAC3 (478 aa).

Disordered stretches follow at residues His-33–Gln-53 and Ser-106–Asn-140. A compositionally biased stretch (low complexity) spans Ser-106–Ser-125. The span at Lys-126–Asn-140 shows a compositional bias: polar residues. WD repeat units follow at residues Gly-163–Asn-202, Gly-226–Ser-268, Asn-270–Ile-307, Phe-310–Val-349, Gly-357–Thr-396, Lys-399–Thr-438, and Glu-440–Ser-478.

It belongs to the THOC3 family.

The sequence is that of WD repeat-containing protein AAC3 (AAC3) from Dictyostelium discoideum (Social amoeba).